The sequence spans 409 residues: Glycosyltransferase GtfC (409 aa).

The protein belongs to the glycosyltransferase 28 family.

The enzyme catalyses dTDP-beta-L-vancosamine + devancoaminyl-vancomycin = epivancomycin + dTDP + H(+). The catalysed reaction is chloroorienticin B + dTDP-beta-L-vancosamine = chloroeremomycin + dTDP + H(+). The protein operates within antibiotic biosynthesis; vancomycin biosynthesis. In terms of biological role, catalyzes the attachment of dTDP-L-4-epi-vancosamine to chloroorienticin B to form chloroeremomycin in the biosynthesis of glycopeptide antibiotic chloroeremomycin, a member of the vancomycin group of antibiotics. Also able to use dTDP-L-4-epi-vancosamine and devancoaminyl-vancomycin (DVV) to create epivancomycin. Acts downstream of GtfA. This is Glycosyltransferase GtfC (gtfC) from Amycolatopsis orientalis (Nocardia orientalis).